The following is an 856-amino-acid chain: DNA mismatch repair protein MutS (856 aa).

609-616 (GPNMSGKS) provides a ligand contact to ATP.

Belongs to the DNA mismatch repair MutS family.

In terms of biological role, this protein is involved in the repair of mismatches in DNA. It is possible that it carries out the mismatch recognition step. This protein has a weak ATPase activity. The polypeptide is DNA mismatch repair protein MutS (Finegoldia magna (strain ATCC 29328 / DSM 20472 / WAL 2508) (Peptostreptococcus magnus)).